A 165-amino-acid chain; its full sequence is Crossover junction endodeoxyribonuclease RuvC (165 aa).

Catalysis depends on residues Asp7, Glu67, and Asp140. The Mg(2+) site is built by Asp7, Glu67, and Asp140.

It belongs to the RuvC family. As to quaternary structure, homodimer which binds Holliday junction (HJ) DNA. The HJ becomes 2-fold symmetrical on binding to RuvC with unstacked arms; it has a different conformation from HJ DNA in complex with RuvA. In the full resolvosome a probable DNA-RuvA(4)-RuvB(12)-RuvC(2) complex forms which resolves the HJ. Requires Mg(2+) as cofactor.

The protein resides in the cytoplasm. It carries out the reaction Endonucleolytic cleavage at a junction such as a reciprocal single-stranded crossover between two homologous DNA duplexes (Holliday junction).. In terms of biological role, the RuvA-RuvB-RuvC complex processes Holliday junction (HJ) DNA during genetic recombination and DNA repair. Endonuclease that resolves HJ intermediates. Cleaves cruciform DNA by making single-stranded nicks across the HJ at symmetrical positions within the homologous arms, yielding a 5'-phosphate and a 3'-hydroxyl group; requires a central core of homology in the junction. The consensus cleavage sequence is 5'-(A/T)TT(C/G)-3'. Cleavage occurs on the 3'-side of the TT dinucleotide at the point of strand exchange. HJ branch migration catalyzed by RuvA-RuvB allows RuvC to scan DNA until it finds its consensus sequence, where it cleaves and resolves the cruciform DNA. In Halothermothrix orenii (strain H 168 / OCM 544 / DSM 9562), this protein is Crossover junction endodeoxyribonuclease RuvC.